Reading from the N-terminus, the 150-residue chain is Ribosomal RNA large subunit methyltransferase H (150 aa).

S-adenosyl-L-methionine-binding positions include L68, G97, and 116–121 (LSAMTL).

The protein belongs to the RNA methyltransferase RlmH family. As to quaternary structure, homodimer.

Its subcellular location is the cytoplasm. The catalysed reaction is pseudouridine(1915) in 23S rRNA + S-adenosyl-L-methionine = N(3)-methylpseudouridine(1915) in 23S rRNA + S-adenosyl-L-homocysteine + H(+). Functionally, specifically methylates the pseudouridine at position 1915 (m3Psi1915) in 23S rRNA. In Prochlorococcus marinus (strain MIT 9303), this protein is Ribosomal RNA large subunit methyltransferase H.